Here is a 487-residue protein sequence, read N- to C-terminus: Glycogen synthase 2 (487 aa).

Residue Lys12 participates in ADP-alpha-D-glucose binding.

It belongs to the glycosyltransferase 1 family. Bacterial/plant glycogen synthase subfamily.

The catalysed reaction is [(1-&gt;4)-alpha-D-glucosyl](n) + ADP-alpha-D-glucose = [(1-&gt;4)-alpha-D-glucosyl](n+1) + ADP + H(+). It participates in glycan biosynthesis; glycogen biosynthesis. In terms of biological role, synthesizes alpha-1,4-glucan chains using ADP-glucose. This Methylococcus capsulatus (strain ATCC 33009 / NCIMB 11132 / Bath) protein is Glycogen synthase 2.